Consider the following 464-residue polypeptide: Protein FAM90A1 (464 aa).

Disordered stretches follow at residues 1–43 (MMAR…PRLK), 71–294 (PNFG…KRSA), 312–386 (PFQI…AASH), 412–437 (PSFH…SEGP), and 445–464 (VLYE…SDLE). Composition is skewed to basic and acidic residues over residues 74–83 (GEKEGKENLK) and 97–114 (NKDK…DPQR). The segment covering 180–197 (LASLSPLRKASLSSSSSL) has biased composition (low complexity). Over residues 344–355 (TSPQTGTRTPAQ) the composition is skewed to polar residues.

Belongs to the FAM90 family.

The protein is Protein FAM90A1 (FAM90A1) of Homo sapiens (Human).